A 247-amino-acid polypeptide reads, in one-letter code: MVGWGVLILLMVLWLPRQAYAMHIMEGYLPLGWCLFWAALCLPALILGTRSLQKQVGDNLRMKLVLALSAAFAFVLSALKLPSVTGSSSHPTGVGLGAVLFGPMAMSVVGCIILLFQALLLAHGGITTLGANTFSMAVVGPTVSYVVFRIFQKSGFGRGVAVFLAAALGDLSTYLTTSLQLALAFPAPIGGVASSFWKFASIFAVTQVPLAVSEGLLTVIMVNWVMKYSPEVLSRAMNLPEEGHHEA.

The first 21 residues, 1-21, serve as a signal peptide directing secretion; the sequence is MVGWGVLILLMVLWLPRQAYA. A run of 7 helical transmembrane segments spans residues 27–47, 64–84, 96–116, 119–139, 159–179, 181–201, and 202–222; these read GYLP…ALIL, LVLA…LPSV, LGAV…ILLF, LLLA…MAVV, GVAV…TTSL, LALA…KFAS, and IFAV…VIMV.

The protein belongs to the CbiM family. As to quaternary structure, forms an energy-coupling factor (ECF) transporter complex composed of an ATP-binding protein (A component, CbiO), a transmembrane protein (T component, CbiQ) and 2 possible substrate-capture proteins (S components, CbiM and CbiN) of unknown stoichimetry.

The protein resides in the cell membrane. Its pathway is cofactor biosynthesis; adenosylcobalamin biosynthesis. Part of the energy-coupling factor (ECF) transporter complex CbiMNOQ involved in cobalt import. This is Cobalt transport protein CbiM from Kyrpidia tusciae (strain DSM 2912 / NBRC 15312 / T2) (Bacillus tusciae).